Here is a 485-residue protein sequence, read N- to C-terminus: NADH-quinone oxidoreductase subunit N (485 aa).

14 helical membrane-spanning segments follow: residues L8–I28, F35–V55, L75–L95, E104–H124, L125–Y145, Y159–A179, I203–F223, P235–I255, T271–Q291, L297–Q317, V326–L346, L383–V403, E406–L426, and M455–I475.

This sequence belongs to the complex I subunit 2 family. As to quaternary structure, NDH-1 is composed of 13 different subunits. Subunits NuoA, H, J, K, L, M, N constitute the membrane sector of the complex.

Its subcellular location is the cell inner membrane. The catalysed reaction is a quinone + NADH + 5 H(+)(in) = a quinol + NAD(+) + 4 H(+)(out). NDH-1 shuttles electrons from NADH, via FMN and iron-sulfur (Fe-S) centers, to quinones in the respiratory chain. The immediate electron acceptor for the enzyme in this species is believed to be ubiquinone. Couples the redox reaction to proton translocation (for every two electrons transferred, four hydrogen ions are translocated across the cytoplasmic membrane), and thus conserves the redox energy in a proton gradient. The protein is NADH-quinone oxidoreductase subunit N of Photorhabdus laumondii subsp. laumondii (strain DSM 15139 / CIP 105565 / TT01) (Photorhabdus luminescens subsp. laumondii).